Consider the following 88-residue polypeptide: Small ribosomal subunit protein uS15 (88 aa).

It belongs to the universal ribosomal protein uS15 family. Part of the 30S ribosomal subunit. Forms a bridge to the 50S subunit in the 70S ribosome, contacting the 23S rRNA.

Functionally, one of the primary rRNA binding proteins, it binds directly to 16S rRNA where it helps nucleate assembly of the platform of the 30S subunit by binding and bridging several RNA helices of the 16S rRNA. Forms an intersubunit bridge (bridge B4) with the 23S rRNA of the 50S subunit in the ribosome. This Acidovorax sp. (strain JS42) protein is Small ribosomal subunit protein uS15.